Consider the following 214-residue polypeptide: Coiled-coil domain-containing protein 169 (214 aa).

The stretch at 56–138 forms a coiled coil; the sequence is SEWKTRYETQ…YAFRLEQESK (83 aa). A disordered region spans residues 154 to 214; it reads MTQVSGSNQV…RSNHLPKLNP (61 aa). Polar residues-rich tracts occupy residues 155-166 and 185-195; these read TQVSGSNQVSKR and HNSMNQKTTNA.

Belongs to the CCDC169 family.

The sequence is that of Coiled-coil domain-containing protein 169 (Ccdc169) from Mus musculus (Mouse).